Reading from the N-terminus, the 88-residue chain is Small ribosomal subunit protein uS15 (88 aa).

Belongs to the universal ribosomal protein uS15 family. Part of the 30S ribosomal subunit. Forms a bridge to the 50S subunit in the 70S ribosome, contacting the 23S rRNA.

Its function is as follows. One of the primary rRNA binding proteins, it binds directly to 16S rRNA where it helps nucleate assembly of the platform of the 30S subunit by binding and bridging several RNA helices of the 16S rRNA. Forms an intersubunit bridge (bridge B4) with the 23S rRNA of the 50S subunit in the ribosome. The sequence is that of Small ribosomal subunit protein uS15 from Acidobacterium capsulatum (strain ATCC 51196 / DSM 11244 / BCRC 80197 / JCM 7670 / NBRC 15755 / NCIMB 13165 / 161).